The sequence spans 575 residues: Sialate:O-sulfotransferase 1 (575 aa).

Topologically, residues 1–14 are cytoplasmic; it reads MAKPFFRLQKFLRR. The chain crosses the membrane as a helical; Signal-anchor for type II membrane protein span at residues 15–35; sequence TQFLLFFLTAAYLMTGSLLLL. Topologically, residues 36–575 are extracellular; sequence QRVRVALPQG…TGLPREYVPR (540 aa). WSC domains are found at residues 142–234 and 245–340; these read RGTY…YRVD and TATY…DTRC. 2 N-linked (GlcNAc...) asparagine glycosylation sites follow: Asn-257 and Asn-348.

The protein belongs to the WSCD family.

Its subcellular location is the golgi apparatus membrane. It catalyses the reaction a ganglioside GM1b + 3'-phosphoadenylyl sulfate = an 8-O-sulfo-ganglioside GM1b + adenosine 3',5'-bisphosphate + H(+). In terms of biological role, sialate:O-sulfotransferase which catalyzes 8-O-sulfation at the Sia-glycan level using 3'-phosphoadenosine 5'-phosphosulfate (PAPS) as a donor, forming 8-O-sulfated Sia (Sia8S)-glycans. Displays selectivity toward glycolipids such as GM1 gangliosides. The polypeptide is Sialate:O-sulfotransferase 1 (WSCD1) (Homo sapiens (Human)).